We begin with the raw amino-acid sequence, 561 residues long: MNINVAELLNGNYILLLFVVLALGLCLGKLRLGSIQLGNSIGVLVVSLLLGQQHFSINTDALNLGFMLFIFCVGVEAGPNFFSIFFRDGKNYLMLALVMVGSALVIALGLGKLFGWDIGLTAGMLAGSMTSTPVLVGAGDTLRHFGMESRQLSLALDNLSLGYALTYLIGLVSLIVGARYLPKLQHQDLQTSAQQIARERGLDTDANRKVYLPVIRAYRVGPELVAWTDGKNLRELGIYRQTGCYIERIRRNGILANPDGDAVLQMGDEIALVGYPDAHARLDPSFRNGKEVFDRDLLDMRIVTEEVVVKNHNAVGKRLAQLKLTDHGCFLNRVIRSQIEMPIDDNVVLNKGDVLQVSGDARRVKTIADRIGFISIHSQVTDLLAFCAFFVIGLMIGMITFQFSTFSFGMGNAAGLLFAGIMLGFMRANHPTFGYIPQGALSMVKEFGLMVFMAGVGLSAGSGINNGLGAIGGQMLIAGLIVSLVPVVICFLFGAYVLRMNRALLFGAMMGARTCAPAMEIISDTARSNIPALGYAGTYAIANVLLTLAGTIIVMVWPGLG.

5 consecutive transmembrane segments (helical) span residues 8–28 (LLNG…LCLG), 32–52 (LGSI…LLGQ), 66–86 (FMLF…SIFF), 94–114 (MLAL…GKLF), and 158–178 (NLSL…IVGA). 2 consecutive RCK C-terminal domains span residues 200 to 288 (RGLD…SFRN) and 292 to 373 (VFDR…RIGF). 5 helical membrane passes run 383-403 (LLAF…TFQF), 406-426 (FSFG…LGFM), 451-471 (VFMA…LGAI), 475-495 (MLIA…LFGA), and 540-560 (AIAN…WPGL).

It belongs to the AAE transporter (TC 2.A.81) family. YbjL subfamily.

It localises to the cell membrane. The polypeptide is Putative transport protein YbjL (Escherichia coli O139:H28 (strain E24377A / ETEC)).